The sequence spans 150 residues: D-aminoacyl-tRNA deacylase (150 aa).

A Gly-cisPro motif, important for rejection of L-amino acids motif is present at residues 138 to 139; sequence GP.

This sequence belongs to the DTD family. In terms of assembly, homodimer.

It localises to the cytoplasm. The catalysed reaction is glycyl-tRNA(Ala) + H2O = tRNA(Ala) + glycine + H(+). It catalyses the reaction a D-aminoacyl-tRNA + H2O = a tRNA + a D-alpha-amino acid + H(+). An aminoacyl-tRNA editing enzyme that deacylates mischarged D-aminoacyl-tRNAs. Also deacylates mischarged glycyl-tRNA(Ala), protecting cells against glycine mischarging by AlaRS. Acts via tRNA-based rather than protein-based catalysis; rejects L-amino acids rather than detecting D-amino acids in the active site. By recycling D-aminoacyl-tRNA to D-amino acids and free tRNA molecules, this enzyme counteracts the toxicity associated with the formation of D-aminoacyl-tRNA entities in vivo and helps enforce protein L-homochirality. In Bacteroides fragilis (strain YCH46), this protein is D-aminoacyl-tRNA deacylase.